Consider the following 540-residue polypeptide: Chaperonin GroEL (540 aa).

ATP-binding positions include 29–32 (TLGP), 86–90 (DGTTT), glycine 413, 476–478 (NAA), and aspartate 492.

Belongs to the chaperonin (HSP60) family. Forms a cylinder of 14 subunits composed of two heptameric rings stacked back-to-back. Interacts with the co-chaperonin GroES.

It localises to the cytoplasm. It catalyses the reaction ATP + H2O + a folded polypeptide = ADP + phosphate + an unfolded polypeptide.. Functionally, together with its co-chaperonin GroES, plays an essential role in assisting protein folding. The GroEL-GroES system forms a nano-cage that allows encapsulation of the non-native substrate proteins and provides a physical environment optimized to promote and accelerate protein folding. This chain is Chaperonin GroEL, found in Streptococcus gordonii (strain Challis / ATCC 35105 / BCRC 15272 / CH1 / DL1 / V288).